The chain runs to 417 residues: Calreticulin (417 aa).

The N-terminal stretch at 1 to 17 (MLLSVPLLLGLLGLAAA) is a signal peptide. Residues 18-197 (EPAVYFKEQF…NSQVESGSLE (180 aa)) form an N-domain region. Glutamine 26 is a Ca(2+) binding site. Lysine 48 is subject to N6-acetyllysine. Ca(2+) contacts are provided by lysine 62 and lysine 64. Position 64 is an N6-(2-hydroxyisobutyryl)lysine (lysine 64). Cysteine 105 and cysteine 137 form a disulfide bridge. The an alpha-D-glucoside site is built by tyrosine 109, lysine 111, tyrosine 128, and aspartate 135. The residue at position 159 (lysine 159) is an N6-acetyllysine. One copy of the 1-1 repeat lies at 191–202 (VESGSLEDDWDF). The segment at 191-255 (VESGSLEDDW…DAKKPEDWDE (65 aa)) is 4 X approximate repeats. Positions 193–277 (SGSLEDDWDF…NPEYKGEWKP (85 aa)) are disordered. The tract at residues 198–308 (DDWDFLPPKK…YSPDANIYAY (111 aa)) is P-domain. Over residues 207-251 (KIKDPDAAKPEDWDERAKIDDPTDSKPEDWDKPEHIPDPDAKKPE) the composition is skewed to basic and acidic residues. At lysine 209 the chain carries N6-acetyllysine. Repeat copies occupy residues 210–221 (DPDAAKPEDWDE), 227–238 (DPTDSKPEDWDK), 244–255 (DPDAKKPEDWDE), 259–269 (GEWEPPVIQNP), 273–283 (GEWKPRQIDNP), and 287–297 (GTWIHPEIDNP). The segment at 237 to 270 (DKPEHIPDPDAKKPEDWDEEMDGEWEPPVIQNPE) is interaction with PPIB. The span at 252-261 (DWDEEMDGEW) shows a compositional bias: acidic residues. Residues 259 to 297 (GEWEPPVIQNPEYKGEWKPRQIDNPDYKGTWIHPEIDNP) form a 3 X approximate repeats region. The interval 309–417 (DSFAVLGLDL…TTPGQTKDEL (109 aa)) is C-domain. Aspartate 317 contacts an alpha-D-glucoside. A Ca(2+)-binding site is contributed by aspartate 328. The disordered stretch occupies residues 350–417 (TKASEKQMKD…TTPGQTKDEL (68 aa)). The segment covering 352–379 (ASEKQMKDKQDEEQRLKEEEEDKKRKEE) has biased composition (basic and acidic residues). The segment covering 380–408 (EEAEDKEDEDDRDEDEEDEDEKEEDEEDT) has biased composition (acidic residues). Residues 414–417 (KDEL) carry the Prevents secretion from ER motif.

It belongs to the calreticulin family. As to quaternary structure, monomer. Component of an EIF2 complex at least composed of CELF1/CUGBP1, CALR, CALR3, EIF2S1, EIF2S2, HSP90B1 and HSPA5. Interacts with PDIA3/ERp57 and SPACA9. Interacts with TRIM21. Interacts with NR3C1. Interacts with PPIB. Interacts (via P-domain) with PDIA5. Interacts with GABARAP. Interacts with CLCC1.

The protein resides in the endoplasmic reticulum lumen. It localises to the cytoplasm. Its subcellular location is the cytosol. It is found in the cytolytic granule. The protein localises to the secreted. The protein resides in the extracellular space. It localises to the extracellular matrix. Its subcellular location is the cell surface. It is found in the sarcoplasmic reticulum lumen. The protein localises to the cytoplasmic vesicle. The protein resides in the secretory vesicle. It localises to the cortical granule. Functionally, calcium-binding chaperone that promotes folding, oligomeric assembly and quality control in the endoplasmic reticulum (ER) via the calreticulin/calnexin cycle. This lectin interacts transiently with almost all of the monoglucosylated glycoproteins that are synthesized in the ER. Interacts with the DNA-binding domain of NR3C1 and mediates its nuclear export. Involved in maternal gene expression regulation. May participate in oocyte maturation via the regulation of calcium homeostasis. Present in the cortical granules of non-activated oocytes, is exocytosed during the cortical reaction in response to oocyte activation and might participate in the block to polyspermy. This is Calreticulin (CALR) from Cricetulus griseus (Chinese hamster).